Reading from the N-terminus, the 502-residue chain is MAAPCEGQAFAVGVEKNWGAVVRSPEGTPQKIRQLIDEGIAPEEGGVDAKDTSATSQSVNGSPQAEQPSLESTSKEAFFSRVETFSSLKWAGKPFELSPLVCAKYGWVTVECDMLKCSSCQAFLCASLQPAFDFDRYKQRCAELKKALCTAHEKFCFWPDSPSPDRFGMLPLDEPAILVSEFLDRFQSLCHLDLQLPSLRPEDLKTMCLTEDKISLLLHLLEDELDHRTDERKTTIKLGSDIQVHVTACILSVCGWACSSSLESMQLSLITCSQCMRKVGLWGFQQIESSMTDLDASFGLTSSPIPGLEGRPERLPLVPESPRRMMTRSQDATFSPGSEQAEKSPGPIVSRTRSWDSSSPVDRPEPEAASPTTRTRPVTRSMGTGDTPGLEVPSSPLRKAKRARLCSSSSSDTSSRSFFDPTSQHRDWCPWVNITLGKESRENGGTEPDASAPAEPGWKAVLTILLAHKQSSQPAETDSMSLSEKSRKVFRIFRQWESLCSC.

Ala2 carries the N-acetylalanine modification. Residue Ser24 is modified to Phosphoserine. At Thr28 the chain carries Phosphothreonine. The disordered stretch occupies residues 36–73; that stretch reads IDEGIAPEEGGVDAKDTSATSQSVNGSPQAEQPSLEST. Residues 52–72 are compositionally biased toward polar residues; it reads TSATSQSVNGSPQAEQPSLES. A phosphoserine mark is found at Ser58 and Ser62. The residue at position 84 (Thr84) is a Phosphothreonine. The segment at 102–156 adopts a C3HC-type zinc-finger fold; sequence CAKYGWVTVECDMLKCSSCQAFLCASLQPAFDFDRYKQRCAELKKALCTAHEKFC. Residues 170–210 form an F-box-like region; sequence LPLDEPAILVSEFLDRFQSLCHLDLQLPSLRPEDLKTMCLT. The disordered stretch occupies residues 302-423; it reads SSPIPGLEGR…SSRSFFDPTS (122 aa). Residues Ser321 and Ser329 each carry the phosphoserine modification. Residues 327–338 are compositionally biased toward polar residues; the sequence is TRSQDATFSPGS. At Thr333 the chain carries Phosphothreonine. A phosphoserine mark is found at Ser335, Ser338, Ser344, Ser354, Ser359, and Ser370. Residues 351–360 show a composition bias toward polar residues; the sequence is RTRSWDSSSP. Residues 371–380 show a composition bias toward low complexity; the sequence is PTTRTRPVTR. Position 381 is a phosphoserine (Ser381). 2 positions are modified to phosphothreonine: Thr384 and Thr387. Ser395 bears the Phosphoserine mark. The short motif at 396–402 is the Nuclear localization signal element; the sequence is PLRKAKR. Phosphoserine is present on residues Ser407 and Ser483. Residues 407 to 422 show a composition bias toward low complexity; that stretch reads SSSSSDTSSRSFFDPT.

Interacts with TPR; this interaction mediates ZC3HC1 nuclear envelopes (NE)-association but also required for proper positioning of a substantial amount of TPR at the nuclear basket (NB). In terms of processing, phosphorylated. May also be weakly phosphorylated on Tyr residues. Widely expressed. Highly expressed in heart, skeletal muscle and testis. Expressed in brain, placenta, lung, kidney, liver, pancreas, spleen, thymus, prostate, ovary small intestine and colon. Weakly or not expressed in leukocytes.

It is found in the nucleus. Its subcellular location is the nucleus envelope. Functionally, required for proper positioning of a substantial amount of TPR at the nuclear basket (NB) through interaction with TPR. This chain is Zinc finger C3HC-type protein 1, found in Homo sapiens (Human).